A 690-amino-acid chain; its full sequence is Methionine--tRNA ligase (690 aa).

A 'HIGH' region motif is present at residues 13–23; it reads PYANGQIHIGH. Cys-144, Cys-147, Cys-157, and Cys-160 together coordinate Zn(2+). The 'KMSKS' region signature appears at 335–339; sequence KMSKS. Lys-338 is an ATP binding site. The 107-residue stretch at 584 to 690 folds into the tRNA-binding domain; sequence DFAKIDLRVA…SGAVPGMRIR (107 aa).

The protein belongs to the class-I aminoacyl-tRNA synthetase family. MetG type 1 subfamily. Homodimer. The cofactor is Zn(2+).

It is found in the cytoplasm. It carries out the reaction tRNA(Met) + L-methionine + ATP = L-methionyl-tRNA(Met) + AMP + diphosphate. Its function is as follows. Is required not only for elongation of protein synthesis but also for the initiation of all mRNA translation through initiator tRNA(fMet) aminoacylation. In Cupriavidus metallidurans (strain ATCC 43123 / DSM 2839 / NBRC 102507 / CH34) (Ralstonia metallidurans), this protein is Methionine--tRNA ligase.